We begin with the raw amino-acid sequence, 197 residues long: Protein GrpE (197 aa).

Residues 1-31 (MSDDTKKQDTAADAEVEKEMEGVPEHLRDDR) show a composition bias toward basic and acidic residues. The interval 1-48 (MSDDTKKQDTAADAEVEKEMEGVPEHLRDDRGSEEDASDDLSAALESL) is disordered.

It belongs to the GrpE family. As to quaternary structure, homodimer.

The protein localises to the cytoplasm. In terms of biological role, participates actively in the response to hyperosmotic and heat shock by preventing the aggregation of stress-denatured proteins, in association with DnaK and GrpE. It is the nucleotide exchange factor for DnaK and may function as a thermosensor. Unfolded proteins bind initially to DnaJ; upon interaction with the DnaJ-bound protein, DnaK hydrolyzes its bound ATP, resulting in the formation of a stable complex. GrpE releases ADP from DnaK; ATP binding to DnaK triggers the release of the substrate protein, thus completing the reaction cycle. Several rounds of ATP-dependent interactions between DnaJ, DnaK and GrpE are required for fully efficient folding. The chain is Protein GrpE from Erythrobacter litoralis (strain HTCC2594).